Here is a 490-residue protein sequence, read N- to C-terminus: Probable glycine dehydrogenase (decarboxylating) subunit 2 (490 aa).

At lysine 273 the chain carries N6-(pyridoxal phosphate)lysine.

It belongs to the GcvP family. C-terminal subunit subfamily. In terms of assembly, the glycine cleavage system is composed of four proteins: P, T, L and H. In this organism, the P 'protein' is a heterodimer of two subunits. Requires pyridoxal 5'-phosphate as cofactor.

It carries out the reaction N(6)-[(R)-lipoyl]-L-lysyl-[glycine-cleavage complex H protein] + glycine + H(+) = N(6)-[(R)-S(8)-aminomethyldihydrolipoyl]-L-lysyl-[glycine-cleavage complex H protein] + CO2. Functionally, the glycine cleavage system catalyzes the degradation of glycine. The P protein binds the alpha-amino group of glycine through its pyridoxal phosphate cofactor; CO(2) is released and the remaining methylamine moiety is then transferred to the lipoamide cofactor of the H protein. The polypeptide is Probable glycine dehydrogenase (decarboxylating) subunit 2 (Staphylococcus aureus (strain MSSA476)).